The following is a 213-amino-acid chain: Protein RCR1 (213 aa).

At 1–39 (MGLISYENEAINEVKKADNHHVSKFVTSYYGPSSSSWQS) the chain is on the lumenal side. The chain crosses the membrane as a helical span at residues 40-62 (GIWILFVLFVAAVILIILFTFVA). At 63 to 213 (NRRRRRMGRA…PERAKVNARS (151 aa)) the chain is on the cytoplasmic side. The short motif at 104–107 (VPEY) is the PY motif element. Residues 190–213 (ERLPGGTTTQEINPPERAKVNARS) form a disordered region. The segment covering 203–213 (PPERAKVNARS) has biased composition (basic and acidic residues).

Interacts with PMT4 and WW domain of RSP5.

The protein resides in the endoplasmic reticulum membrane. In terms of biological role, regulates chitin deposition in the cell wall. The protein is Protein RCR1 (RCR1) of Saccharomyces cerevisiae (strain ATCC 204508 / S288c) (Baker's yeast).